Consider the following 245-residue polypeptide: Phycocyanobilin:ferredoxin oxidoreductase (245 aa).

This sequence belongs to the HY2 family.

The catalysed reaction is (2R,3Z)-phycocyanobilin + 4 oxidized [2Fe-2S]-[ferredoxin] = biliverdin IXalpha + 4 reduced [2Fe-2S]-[ferredoxin] + 4 H(+). Functionally, catalyzes the four-electron reduction of biliverdin IX-alpha (2-electron reduction at both the A and D rings); the reaction proceeds via an isolatable 2-electron intermediate, 181,182-dihydrobiliverdin. The chain is Phycocyanobilin:ferredoxin oxidoreductase from Gloeothece citriformis (strain PCC 7424) (Cyanothece sp. (strain PCC 7424)).